A 78-amino-acid chain; its full sequence is Large ribosomal subunit protein bL28 (78 aa).

The protein belongs to the bacterial ribosomal protein bL28 family.

The polypeptide is Large ribosomal subunit protein bL28 (Corynebacterium aurimucosum (strain ATCC 700975 / DSM 44827 / CIP 107346 / CN-1) (Corynebacterium nigricans)).